A 726-amino-acid chain; its full sequence is Cyclin-T1 (726 aa).

Position 117 is a phosphoserine (Ser117). The Nuclear localization signal, and interaction with Tat-TAR RNA motif lies at 253-270; that stretch reads KRIWNWRACEAAKKTKAD. Position 340 is a phosphoserine (Ser340). Lys342 participates in a covalent cross-link: Glycyl lysine isopeptide (Lys-Gly) (interchain with G-Cter in SUMO2). The disordered stretch occupies residues 360-385; that stretch reads VDHSLPQDGSNAFISQKQNSKSVPSA. The span at 366–382 shows a compositional bias: polar residues; it reads QDGSNAFISQKQNSKSV. Residues 384 to 425 adopt a coiled-coil conformation; the sequence is SAKVSLKEYRAKHAEELAAQKRQLENMEANVKSQYAYAAQNL. Ser388 is modified (phosphoserine). Lys390 carries the N6-acetyllysine modification. Lys415 participates in a covalent cross-link: Glycyl lysine isopeptide (Lys-Gly) (interchain with G-Cter in SUMO2). Ser416, Ser474, and Ser475 each carry ADP-ribosylserine. Residues 480–550 form a histidine-rich domain (HRD) region; it reads IKMRIKVHAA…RPGDPKHSSQ (71 aa). A Glycyl lysine isopeptide (Lys-Gly) (interchain with G-Cter in SUMO2) cross-link involves residue Lys481. An N6-(ADP-ribosyl)lysine modification is found at Lys485. At His487 the chain carries ADP-ribosylhistidine. Basic and acidic residues predominate over residues 487 to 506; that stretch reads HAAADKHNSVEDSVTKSREH. Disordered stretches follow at residues 487–650 and 688–726; these read HAAA…NGHN and SDYLNPRSGGISSRSGNTDKPRPPPLPSEPPPPLPPLPK. Residues Ser495 and Ser499 each carry the phosphoserine modification. Residues 507 to 530 are compositionally biased toward basic residues; the sequence is KEKHKTHPSNHHHHHNHHSHKHSH. Residues 527 to 570 form a required for interaction with ZMYND8 region; the sequence is KHSHSQLPVGTGNKRPGDPKHSSQTSNLAHKTYSLSSSFSSSSS. His530 carries the post-translational modification ADP-ribosylhistidine. ADP-ribosylserine occurs at positions 531, 549, and 552. An ADP-ribosylhistidine modification is found at His556. Residues 560 to 570 are compositionally biased toward low complexity; that stretch reads SLSSSFSSSSS. Ser563 is modified (ADP-ribosylserine). Residues Ser564 and Ser577 each carry the phosphoserine modification. The span at 594-609 shows a compositional bias: low complexity; it reads STKSSSLNFSFPSLPT. Positions 615–630 are enriched in polar residues; the sequence is GHSSDTSGLSFSQPSC. Ser637 carries the post-translational modification ADP-ribosylserine. Over residues 710-726 the composition is skewed to pro residues; the sequence is PPPLPSEPPPPLPPLPK.

The protein belongs to the cyclin family. Cyclin C subfamily. As to quaternary structure, cyclin-T1 is the predominant cyclin that associates with CDK9 to form a heterodimer called P-TEFb. P-TEFb forms a complex with AFF4/AF5Q31. Component of a complex which is at least composed of HTATSF1/Tat-SF1, P-TEFb complex, RNA pol II, SUPT5H, and NCL/nucleolin. Component of the 7SK snRNP complex at least composed of P-TEFb (composed of CDK9 and CCNT1/cyclin-T1), HEXIM1, HEXIM2, BCDIN3, SART3 proteins and 7SK and U6 snRNAs. Interacts (via central region) with ZMYND8 (via N-terminus); the interaction is direct and the association appears to occur between homodimeric ZMYND8 and the activated form of the P-TEFb complex. Interacts with BRD4, targets chromatin binding. Interacts with JMJD6. Interacts with MDFIC. Interacts with HSF1. Interacts with HTATSF1. Interacts with TBX21. (Microbial infection) Interacts with the transactivation region of HIV-1, HIV-2 and SIV Tat. In terms of assembly, (Microbial infection) Interacts with human herpes virus 1 (HHV-1) transcriptional regulator ICP22. ADP-ribosylation on serine residues by PARP1 in response to DNA damage disrupts the phase separation activity of CCNT1, thereby preventing activation of CDK9. In terms of tissue distribution, ubiquitously expressed.

It localises to the nucleus. In terms of biological role, regulatory subunit of the cyclin-dependent kinase pair (CDK9/cyclin-T1) complex, also called positive transcription elongation factor B (P-TEFb), which facilitates the transition from abortive to productive elongation by phosphorylating the CTD (C-terminal domain) of the large subunit of RNA polymerase II (RNA Pol II). Required to activate the protein kinase activity of CDK9: acts by mediating formation of liquid-liquid phase separation (LLPS) that enhances binding of P-TEFb to the CTD of RNA Pol II. (Microbial infection) In case of HIV or SIV infections, binds to the transactivation domain of the viral nuclear transcriptional activator, Tat, thereby increasing Tat's affinity for the transactivating response RNA element (TAR RNA). Serves as an essential cofactor for Tat, by promoting RNA Pol II activation, allowing transcription of viral genes. The protein is Cyclin-T1 (CCNT1) of Homo sapiens (Human).